Here is a 119-residue protein sequence, read N- to C-terminus: ATP-dependent Clp protease adapter protein ClpS (119 aa).

Residues 1–24 (MGPESPDSIPPHGPGNGDGDQDLD) are disordered.

This sequence belongs to the ClpS family. Binds to the N-terminal domain of the chaperone ClpA.

In terms of biological role, involved in the modulation of the specificity of the ClpAP-mediated ATP-dependent protein degradation. The polypeptide is ATP-dependent Clp protease adapter protein ClpS (Gluconobacter oxydans (strain 621H) (Gluconobacter suboxydans)).